The following is a 1196-amino-acid chain: Contactin rig-6 (1196 aa).

Positions 1-19 (MMMLIRCISIFLLFGFVNA) are cleaved as a signal peptide. N-linked (GlcNAc...) asparagine glycosylation is found at Asn100 and Asn195. Ig-like C2-type domains follow at residues 144–225 (PQIS…ARNS) and 232–319 (PPIL…CSLS). Cystine bridges form between Cys169–Cys220 and Cys263–Cys316. Asn343 carries N-linked (GlcNAc...) asparagine glycosylation. 4 consecutive Ig-like C2-type domains span residues 355 to 438 (PQIF…VKLR), 441 to 533 (PSIL…ALLT), 539 to 626 (PVFP…VQLI), and 631 to 730 (PSIK…EFVT). A disulfide bond links Cys372 and Cys420. N-linked (GlcNAc...) asparagine glycosylation is present at Asn457. 2 disulfides stabilise this stretch: Cys462-Cys517 and Cys562-Cys610. Asn644 carries an N-linked (GlcNAc...) asparagine glycan. Residues Cys653 and Cys718 are joined by a disulfide bond. Fibronectin type-III domains follow at residues 736 to 844 (SPIA…TAPG), 849 to 961 (TIDN…SHGE), 963 to 1057 (KKVS…TKQH), and 1064 to 1168 (LIGK…LGSP). N-linked (GlcNAc...) asparagine glycans are attached at residues Asn895, Asn925, Asn945, Asn974, Asn979, Asn986, Asn1002, and Asn1092. The helical transmembrane segment at 1174 to 1194 (TTGSSDVPIPSLLLLLLLLLW) threads the bilayer. Ser1177 carries the GPI-anchor amidated serine lipid modification. Residues 1178–1196 (SDVPIPSLLLLLLLLLWRL) constitute a propeptide, removed in mature form.

Belongs to the immunoglobulin superfamily. Contactin family. As to quaternary structure, interacts with sax-7; the interaction establishes synaptic connections between neurons. Expressed in neurons including the I1 and I3 pharyngeal interneurons, NSM and VNC motor neurons, HSN and CAN neurons, the ALM and PLM touch receptor neurons and other unidentified head neurons. Expressed in AVG interneurons. Also expressed in somatic muscles, the excretory canal, the excretory cell and the hypodermis.

It is found in the cell membrane. Its subcellular location is the perikaryon. The protein resides in the cell projection. The protein localises to the axon. It localises to the synapse. It is found in the cytoplasm. Probable cell adhesion protein involved in patterning of the nervous system, playing a role in ALM and PLM touch receptor axon growth and VNC axon navigation. By associating with the transmembrane protein sax-7, mediates axonal interactions to establish synaptic connections between the AVG interneuron and the two PHC sensory neurons. Also required for non-neuronal cell migration in the excretory canal, regulating excretory canal elongation and excretory cell morphogenesis. Plays a role in regulating male mating behavior. This chain is Contactin rig-6, found in Caenorhabditis elegans.